We begin with the raw amino-acid sequence, 189 residues long: Probable nicotinate-nucleotide adenylyltransferase (189 aa).

The protein belongs to the NadD family.

It catalyses the reaction nicotinate beta-D-ribonucleotide + ATP + H(+) = deamido-NAD(+) + diphosphate. It functions in the pathway cofactor biosynthesis; NAD(+) biosynthesis; deamido-NAD(+) from nicotinate D-ribonucleotide: step 1/1. Catalyzes the reversible adenylation of nicotinate mononucleotide (NaMN) to nicotinic acid adenine dinucleotide (NaAD). This is Probable nicotinate-nucleotide adenylyltransferase from Staphylococcus aureus (strain bovine RF122 / ET3-1).